The following is a 316-amino-acid chain: Ribosomal RNA small subunit methyltransferase H (316 aa).

S-adenosyl-L-methionine contacts are provided by residues 35 to 37 (SGH), Asp-55, Phe-84, Asp-105, and Gln-112.

This sequence belongs to the methyltransferase superfamily. RsmH family.

It localises to the cytoplasm. It catalyses the reaction cytidine(1402) in 16S rRNA + S-adenosyl-L-methionine = N(4)-methylcytidine(1402) in 16S rRNA + S-adenosyl-L-homocysteine + H(+). Functionally, specifically methylates the N4 position of cytidine in position 1402 (C1402) of 16S rRNA. The polypeptide is Ribosomal RNA small subunit methyltransferase H (Streptococcus pyogenes serotype M18 (strain MGAS8232)).